The primary structure comprises 439 residues: Ribulose bisphosphate carboxylase/oxygenase activase 2, chloroplastic (439 aa).

Residues 1–58 (MATSVSTIGAANKAPLSLNNSVAGTSVPSTAFFGKTLKKVYGKGVSSPKVTNRSLRIA) constitute a chloroplast transit peptide. Position 169 to 176 (169 to 176 (GGKGQGKS)) interacts with ATP.

It belongs to the RuBisCO activase family.

It localises to the plastid. The protein localises to the chloroplast stroma. In terms of biological role, activation of RuBisCO (ribulose-1,5-bisphosphate carboxylase/oxygenase; EC 4.1.1.39) involves the ATP-dependent carboxylation of the epsilon-amino group of lysine leading to a carbamate structure. This Nicotiana tabacum (Common tobacco) protein is Ribulose bisphosphate carboxylase/oxygenase activase 2, chloroplastic (RCA).